A 117-amino-acid polypeptide reads, in one-letter code: Large ribosomal subunit protein bL20c (117 aa).

Belongs to the bacterial ribosomal protein bL20 family.

It is found in the plastid. The protein localises to the chloroplast. Binds directly to 23S ribosomal RNA and is necessary for the in vitro assembly process of the 50S ribosomal subunit. It is not involved in the protein synthesizing functions of that subunit. The protein is Large ribosomal subunit protein bL20c of Barbarea verna (Land cress).